Reading from the N-terminus, the 339-residue chain is Cobalt-precorrin-5B C(1)-methyltransferase (339 aa).

Belongs to the CbiD family.

The enzyme catalyses Co-precorrin-5B + S-adenosyl-L-methionine = Co-precorrin-6A + S-adenosyl-L-homocysteine. The protein operates within cofactor biosynthesis; adenosylcobalamin biosynthesis; cob(II)yrinate a,c-diamide from sirohydrochlorin (anaerobic route): step 6/10. Functionally, catalyzes the methylation of C-1 in cobalt-precorrin-5B to form cobalt-precorrin-6A. The sequence is that of Cobalt-precorrin-5B C(1)-methyltransferase from Methanosarcina acetivorans (strain ATCC 35395 / DSM 2834 / JCM 12185 / C2A).